We begin with the raw amino-acid sequence, 296 residues long: 4-hydroxy-tetrahydrodipicolinate synthase (296 aa).

Thr-49 is a pyruvate binding site. Catalysis depends on Tyr-137, which acts as the Proton donor/acceptor. Catalysis depends on Lys-166, which acts as the Schiff-base intermediate with substrate. Ile-208 contributes to the pyruvate binding site.

This sequence belongs to the DapA family. In terms of assembly, homotetramer; dimer of dimers.

It is found in the cytoplasm. The enzyme catalyses L-aspartate 4-semialdehyde + pyruvate = (2S,4S)-4-hydroxy-2,3,4,5-tetrahydrodipicolinate + H2O + H(+). It functions in the pathway amino-acid biosynthesis; L-lysine biosynthesis via DAP pathway; (S)-tetrahydrodipicolinate from L-aspartate: step 3/4. Catalyzes the condensation of (S)-aspartate-beta-semialdehyde [(S)-ASA] and pyruvate to 4-hydroxy-tetrahydrodipicolinate (HTPA). The sequence is that of 4-hydroxy-tetrahydrodipicolinate synthase from Chlorobium luteolum (strain DSM 273 / BCRC 81028 / 2530) (Pelodictyon luteolum).